The chain runs to 194 residues: Peptidyl-tRNA hydrolase (194 aa).

TRNA is bound at residue tyrosine 17. The Proton acceptor role is filled by histidine 22. The tRNA site is built by phenylalanine 68, asparagine 70, and asparagine 116.

It belongs to the PTH family. As to quaternary structure, monomer.

The protein resides in the cytoplasm. It catalyses the reaction an N-acyl-L-alpha-aminoacyl-tRNA + H2O = an N-acyl-L-amino acid + a tRNA + H(+). Functionally, hydrolyzes ribosome-free peptidyl-tRNAs (with 1 or more amino acids incorporated), which drop off the ribosome during protein synthesis, or as a result of ribosome stalling. Its function is as follows. Catalyzes the release of premature peptidyl moieties from peptidyl-tRNA molecules trapped in stalled 50S ribosomal subunits, and thus maintains levels of free tRNAs and 50S ribosomes. The sequence is that of Peptidyl-tRNA hydrolase from Glaesserella parasuis serovar 5 (strain SH0165) (Haemophilus parasuis).